Reading from the N-terminus, the 249-residue chain is DNA repair protein RecO (249 aa).

The protein belongs to the RecO family.

In terms of biological role, involved in DNA repair and RecF pathway recombination. The protein is DNA repair protein RecO of Afipia carboxidovorans (strain ATCC 49405 / DSM 1227 / KCTC 32145 / OM5) (Oligotropha carboxidovorans).